The sequence spans 451 residues: Mannan endo-1,6-alpha-mannosidase DFG5 (451 aa).

An N-terminal signal peptide occupies residues 1-21 (MVSLQQLTISILLLFTASVQS). Residues Asn-86, Asn-111, Asn-135, Asn-203, Asn-243, Asn-268, and Asn-402 are each glycosylated (N-linked (GlcNAc...) asparagine). Residue Ala-429 is the site of GPI-anchor amidated alanine attachment. The propeptide at 430-451 (GAGVLTAIVLAVILGGAIWMIF) is removed in mature form.

The protein belongs to the glycosyl hydrolase 76 family. In terms of processing, the GPI-anchor is attached to the protein in the endoplasmic reticulum and serves to target the protein to the cell surface. There, the glucosamine-inositol phospholipid moiety is cleaved off and the GPI-modified mannoprotein is covalently attached via its lipidless GPI glycan remnant to the 1,6-beta-glucan of the outer cell wall layer. Post-translationally, N-mannosylated.

The protein localises to the secreted. It is found in the cell wall. It localises to the cell membrane. It catalyses the reaction Random hydrolysis of (1-&gt;6)-alpha-D-mannosidic linkages in unbranched (1-&gt;6)-mannans.. Its function is as follows. Required for normal synthesis of the cell wall and alkaline pH-induced hypha formation. The polypeptide is Mannan endo-1,6-alpha-mannosidase DFG5 (DFG5) (Candida albicans (strain SC5314 / ATCC MYA-2876) (Yeast)).